Reading from the N-terminus, the 931-residue chain is DNA mismatch repair protein MutS (931 aa).

Over residues 1–10 (MMDDTAMPAR) the composition is skewed to low complexity. A disordered region spans residues 1–34 (MMDDTAMPARAEADAAEDELAAPAGIDRTAKADK). Residue 674 to 681 (GPNMAGKS) coordinates ATP.

This sequence belongs to the DNA mismatch repair MutS family.

Functionally, this protein is involved in the repair of mismatches in DNA. It is possible that it carries out the mismatch recognition step. This protein has a weak ATPase activity. The chain is DNA mismatch repair protein MutS from Azorhizobium caulinodans (strain ATCC 43989 / DSM 5975 / JCM 20966 / LMG 6465 / NBRC 14845 / NCIMB 13405 / ORS 571).